The following is a 204-amino-acid chain: COBRA-like protein 5 (204 aa).

The signal sequence occupies residues Met1–Ala24. N-linked (GlcNAc...) asparagine glycans are attached at residues Asn31 and Asn195.

It belongs to the COBRA family. As to expression, expressed in roots, stems, leaves, flowers and siliques.

This Arabidopsis thaliana (Mouse-ear cress) protein is COBRA-like protein 5 (COBL5).